The following is a 443-amino-acid chain: Ribosomal protein uS12 methylthiotransferase RimO (443 aa).

Residues 5 to 116 enclose the MTTase N-terminal domain; sequence PTIAINHLGC…IVDIIRRTEQ (112 aa). Residues C14, C50, C79, C154, C158, and C161 each coordinate [4Fe-4S] cluster. Positions 140 to 369 constitute a Radical SAM core domain; sequence TTNEAIAYLR…MALQQPISAQ (230 aa). The TRAM domain maps to 372–438; sequence AACLGQTLDV…DYDLYGMTAE (67 aa).

The protein belongs to the methylthiotransferase family. RimO subfamily. The cofactor is [4Fe-4S] cluster.

Its subcellular location is the cytoplasm. The catalysed reaction is L-aspartate(89)-[ribosomal protein uS12]-hydrogen + (sulfur carrier)-SH + AH2 + 2 S-adenosyl-L-methionine = 3-methylsulfanyl-L-aspartate(89)-[ribosomal protein uS12]-hydrogen + (sulfur carrier)-H + 5'-deoxyadenosine + L-methionine + A + S-adenosyl-L-homocysteine + 2 H(+). Its function is as follows. Catalyzes the methylthiolation of an aspartic acid residue of ribosomal protein uS12. The protein is Ribosomal protein uS12 methylthiotransferase RimO of Synechocystis sp. (strain ATCC 27184 / PCC 6803 / Kazusa).